Here is a 610-residue protein sequence, read N- to C-terminus: UvrABC system protein C (610 aa).

Residues 16–94 (SQPGVYRMYD…IQRYQPRYNV (79 aa)) enclose the GIY-YIG domain. The region spanning 204-239 (SQVIEGLIKRMEEASQALRFEEAARIRDQIHAVRQV) is the UVR domain.

It belongs to the UvrC family. Interacts with UvrB in an incision complex.

It is found in the cytoplasm. Its function is as follows. The UvrABC repair system catalyzes the recognition and processing of DNA lesions. UvrC both incises the 5' and 3' sides of the lesion. The N-terminal half is responsible for the 3' incision and the C-terminal half is responsible for the 5' incision. In Proteus mirabilis (strain HI4320), this protein is UvrABC system protein C.